We begin with the raw amino-acid sequence, 136 residues long: Small nuclear ribonucleoprotein Sm D3 (136 aa).

Residues V6–L78 form the Sm domain. Positions G98 to G136 are disordered.

It belongs to the snRNP core protein family.

Its subcellular location is the nucleus. It localises to the cytoplasm. It is found in the cytosol. Plays a role in pre-mRNA splicing as a core component of the spliceosomal U1, U2, U4 and U5 small nuclear ribonucleoproteins (snRNPs), the building blocks of the spliceosome. The polypeptide is Small nuclear ribonucleoprotein Sm D3 (snr-1) (Caenorhabditis elegans).